We begin with the raw amino-acid sequence, 97 residues long: Exodeoxyribonuclease 7 small subunit (97 aa).

Residues 1-21 are disordered; it reads MAKTATPGACASDPGSGPLPE.

The protein belongs to the XseB family. As to quaternary structure, heterooligomer composed of large and small subunits.

Its subcellular location is the cytoplasm. It carries out the reaction Exonucleolytic cleavage in either 5'- to 3'- or 3'- to 5'-direction to yield nucleoside 5'-phosphates.. Its function is as follows. Bidirectionally degrades single-stranded DNA into large acid-insoluble oligonucleotides, which are then degraded further into small acid-soluble oligonucleotides. This Burkholderia mallei (strain NCTC 10247) protein is Exodeoxyribonuclease 7 small subunit.